The following is an 85-amino-acid chain: Toxin Cll6 (85 aa).

A signal peptide spans 1–19; that stretch reads MNSLLMIIGCLVLIGTVWT. Residues 20–83 form the LCN-type CS-alpha/beta domain; it reads KEGYLVNMKT…TWPLPGKSCS (64 aa). 4 disulfide bridges follow: cysteine 31–cysteine 82, cysteine 35–cysteine 58, cysteine 44–cysteine 63, and cysteine 48–cysteine 65. Serine 83 is subject to Serine amide.

Belongs to the long (4 C-C) scorpion toxin superfamily. Sodium channel inhibitor family. Beta subfamily. In terms of tissue distribution, expressed by the venom gland.

The protein resides in the secreted. Beta toxins bind voltage-independently at site-4 of sodium channels (Nav) and shift the voltage of activation toward more negative potentials thereby affecting sodium channel activation and promoting spontaneous and repetitive firing. In Centruroides limpidus (Mexican scorpion), this protein is Toxin Cll6.